The chain runs to 267 residues: Oxidoreductase ordB (267 aa).

It belongs to the avfA family.

Its pathway is mycotoxin biosynthesis. In terms of biological role, oxidoreductase; part of the fragmented gene cluster that mediates the biosynthesis of dothistromin (DOTH), a polyketide toxin very similar in structure to the aflatoxin precursor, versicolorin B. The first step of the pathway is the conversion of acetate to norsolorinic acid (NOR) and requires the fatty acid synthase subunits hexA and hexB, as well as the polyketide synthase pksA. PksA combines a hexanoyl starter unit and 7 malonyl-CoA extender units to synthesize the precursor NOR. The hexanoyl starter unit is provided to the acyl-carrier protein (ACP) domain by the fungal fatty acid synthase hexA/hexB. The second step is the conversion of NOR to averantin (AVN) and requires the norsolorinic acid ketoreductase nor1, which catalyzes the dehydration of norsolorinic acid to form (1'S)-averantin. The cytochrome P450 monooxygenase avnA then catalyzes the hydroxylation of AVN to 5'hydroxyaverantin (HAVN). The next step is performed by adhA that transforms HAVN to averufin (AVF). Averufin might then be converted to hydroxyversicolorone by cypX and avfA. Hydroxyversicolorone is further converted versiconal hemiacetal acetate (VHA) by moxY. VHA is then the substrate for the versiconal hemiacetal acetate esterase est1 to yield versiconal (VAL). Versicolorin B synthase vbsA then converts VAL to versicolorin B (VERB) by closing the bisfuran ring. Then, the activity of the versicolorin B desaturase verB leads to versicolorin A (VERA). DotB, a predicted chloroperoxidase, may perform epoxidation of the A-ring of VERA. Alternatively, a cytochrome P450, such as cypX or avnA could catalyze this step. It is also possible that another, uncharacterized, cytochrome P450 enzyme is responsible for this step. Opening of the epoxide could potentially be achieved by the epoxide hydrolase epoA. However, epoA seems not to be required for DOTH biosynthesis, but other epoxide hydrolases may have the ability to complement this hydrolysis. Alternatively, opening of the epoxide ring could be achieved non-enzymatically. The next step is the deoxygenation of ring A to yield the 5,8-dihydroxyanthraquinone which is most likely catalyzed by the NADPH dehydrogenase encoded by ver1. The last stages of DOTH biosynthesis are proposed to involve hydroxylation of the bisfuran. OrdB and norB might have oxidative roles here. An alternative possibility is that cytochrome P450 monoogenases such as avnA and cypX might perform these steps in addition to previously proposed steps. This Dothistroma septosporum (strain NZE10 / CBS 128990) (Red band needle blight fungus) protein is Oxidoreductase ordB.